A 167-amino-acid polypeptide reads, in one-letter code: Periplasmic nitrate reductase, electron transfer subunit (167 aa).

Residues 1 to 34 form the signal peptide; sequence MRRAHRAGERVMMKRFGIALLAVAIAAGASSLTA. Residues 40–65 form a disordered region; that stretch reads GLHGPAPLNDEGPAPPMLPNRNTSER. Residues histidine 79, cysteine 93, cysteine 96, histidine 97, histidine 114, cysteine 133, cysteine 136, and histidine 137 each contribute to the heme c site.

The protein belongs to the NapB family. Component of the periplasmic nitrate reductase NapAB complex composed of NapA and NapB. In terms of processing, binds 2 heme C groups per subunit.

It localises to the periplasm. Functionally, electron transfer subunit of the periplasmic nitrate reductase complex NapAB. Receives electrons from the membrane-anchored tetraheme c-type NapC protein and transfers these to NapA subunit, thus allowing electron flow between membrane and periplasm. Essential for periplasmic nitrate reduction with nitrate as the terminal electron acceptor. The sequence is that of Periplasmic nitrate reductase, electron transfer subunit from Bradyrhizobium japonicum.